The sequence spans 404 residues: Probable tRNA sulfurtransferase (404 aa).

A THUMP domain is found at 60–165 (QPIVEALKLV…DEAAYISYEE (106 aa)). ATP-binding positions include 183-184 (ML), 208-209 (HF), Arg-265, Gly-287, and Gln-296.

It belongs to the ThiI family.

The protein localises to the cytoplasm. It catalyses the reaction [ThiI sulfur-carrier protein]-S-sulfanyl-L-cysteine + a uridine in tRNA + 2 reduced [2Fe-2S]-[ferredoxin] + ATP + H(+) = [ThiI sulfur-carrier protein]-L-cysteine + a 4-thiouridine in tRNA + 2 oxidized [2Fe-2S]-[ferredoxin] + AMP + diphosphate. It carries out the reaction [ThiS sulfur-carrier protein]-C-terminal Gly-Gly-AMP + S-sulfanyl-L-cysteinyl-[cysteine desulfurase] + AH2 = [ThiS sulfur-carrier protein]-C-terminal-Gly-aminoethanethioate + L-cysteinyl-[cysteine desulfurase] + A + AMP + 2 H(+). It participates in cofactor biosynthesis; thiamine diphosphate biosynthesis. Functionally, catalyzes the ATP-dependent transfer of a sulfur to tRNA to produce 4-thiouridine in position 8 of tRNAs, which functions as a near-UV photosensor. Also catalyzes the transfer of sulfur to the sulfur carrier protein ThiS, forming ThiS-thiocarboxylate. This is a step in the synthesis of thiazole, in the thiamine biosynthesis pathway. The sulfur is donated as persulfide by IscS. This Streptococcus pyogenes serotype M49 (strain NZ131) protein is Probable tRNA sulfurtransferase.